Here is a 372-residue protein sequence, read N- to C-terminus: Glutamate 5-kinase (372 aa).

Lys-14 provides a ligand contact to ATP. Residues Ser-54, Asp-141, and Asn-153 each contribute to the substrate site. 173–174 is a binding site for ATP; the sequence is TD. One can recognise a PUA domain in the interval 280 to 358; that stretch reads RGTLTLDEGA…DEIEKLLGYV (79 aa).

This sequence belongs to the glutamate 5-kinase family.

The protein localises to the cytoplasm. It catalyses the reaction L-glutamate + ATP = L-glutamyl 5-phosphate + ADP. It participates in amino-acid biosynthesis; L-proline biosynthesis; L-glutamate 5-semialdehyde from L-glutamate: step 1/2. Functionally, catalyzes the transfer of a phosphate group to glutamate to form L-glutamate 5-phosphate. The sequence is that of Glutamate 5-kinase from Stutzerimonas stutzeri (strain A1501) (Pseudomonas stutzeri).